Reading from the N-terminus, the 378-residue chain is Biotin synthase, mitochondrial (378 aa).

The transit peptide at 1 to 26 (MMLVRSVFRSQLRPSVSGGLQSASCY) directs the protein to the mitochondrion. Residues 79 to 308 (REVQQCTLLS…KAMVRLSAGR (230 aa)) form the Radical SAM core domain. 3 residues coordinate [4Fe-4S] cluster: Cys-94, Cys-98, and Cys-101. Positions 138, 171, 231, and 303 each coordinate [2Fe-2S] cluster. The disordered stretch occupies residues 357-378 (PPSFSEDDSESENCEKVASASH).

Belongs to the radical SAM superfamily. Biotin synthase family. It depends on [4Fe-4S] cluster as a cofactor. [2Fe-2S] cluster serves as cofactor.

It localises to the mitochondrion. The enzyme catalyses (4R,5S)-dethiobiotin + (sulfur carrier)-SH + 2 reduced [2Fe-2S]-[ferredoxin] + 2 S-adenosyl-L-methionine = (sulfur carrier)-H + biotin + 2 5'-deoxyadenosine + 2 L-methionine + 2 oxidized [2Fe-2S]-[ferredoxin]. It functions in the pathway cofactor biosynthesis; biotin biosynthesis; biotin from 7,8-diaminononanoate: step 2/2. The protein is Biotin synthase, mitochondrial (BIO2) of Arabidopsis thaliana (Mouse-ear cress).